The chain runs to 373 residues: Alanine dehydrogenase (373 aa).

The substrate site is built by R15 and K75. H96 serves as the catalytic Proton donor/acceptor. NAD(+) is bound by residues S134, 178–179 (IV), D198, S220, 239–240 (VL), 267–270 (VAID), R280, and 299–302 (VANI). Residue D270 is the Proton donor/acceptor of the active site.

It belongs to the AlaDH/PNT family. In terms of assembly, homohexamer. Trimer of dimer.

It is found in the cytoplasm. The catalysed reaction is L-alanine + NAD(+) + H2O = pyruvate + NH4(+) + NADH + H(+). It functions in the pathway amino-acid degradation; L-alanine degradation via dehydrogenase pathway; NH(3) and pyruvate from L-alanine: step 1/1. Catalyzes the reversible reductive amination of pyruvate to L-alanine. This enzyme is a key factor in the assimilation of L-alanine as an energy source through the tricarboxylic acid cycle. The protein is Alanine dehydrogenase of Methanococcus maripaludis (strain DSM 14266 / JCM 13030 / NBRC 101832 / S2 / LL).